We begin with the raw amino-acid sequence, 285 residues long: uncharacterized protein (285 aa).

The region spanning 107–285 (FLTVDTTIFD…KHHLKRQMIP (179 aa)) is the ATP-grasp domain.

This is an uncharacterized protein from Mycoplasma pneumoniae (strain ATCC 29342 / M129 / Subtype 1) (Mycoplasmoides pneumoniae).